The chain runs to 237 residues: Sugar fermentation stimulation protein homolog (237 aa).

The protein belongs to the SfsA family.

This is Sugar fermentation stimulation protein homolog from Thioalkalivibrio sulfidiphilus (strain HL-EbGR7).